Reading from the N-terminus, the 611-residue chain is Methionine--tRNA ligase (611 aa).

A 'HIGH' region motif is present at residues 12 to 22; the sequence is PYANGPRHIGH. Residues Cys-144, Cys-147, Cys-157, and Cys-160 each contribute to the Zn(2+) site. A 'KMSKS' region motif is present at residues 348-352; that stretch reads KFSSS. Ser-351 lines the ATP pocket.

This sequence belongs to the class-I aminoacyl-tRNA synthetase family. MetG type 1 subfamily. As to quaternary structure, monomer. Zn(2+) serves as cofactor.

The protein resides in the cytoplasm. The enzyme catalyses tRNA(Met) + L-methionine + ATP = L-methionyl-tRNA(Met) + AMP + diphosphate. Is required not only for elongation of protein synthesis but also for the initiation of all mRNA translation through initiator tRNA(fMet) aminoacylation. The chain is Methionine--tRNA ligase from Corynebacterium urealyticum (strain ATCC 43042 / DSM 7109).